The sequence spans 709 residues: Solute carrier organic anion transporter family member 2B1 (709 aa).

The disordered stretch occupies residues Met-1 to Gln-38. Residues Met-1–Lys-49 lie on the Cytoplasmic side of the membrane. Position 34 is a phosphoserine (Ser-34). Residues Leu-50–Leu-69 form a helical membrane-spanning segment. Residues Phe-51–Leu-69 form a required for E1S and taurocholate transport; required for transporter stability region. Over Lys-70–Gly-88 the chain is Extracellular. Residues Leu-89 to Gly-109 form a helical membrane-spanning segment. Over Ser-110–Pro-115 the chain is Cytoplasmic. The helical transmembrane segment at Arg-116–Glu-140 threads the bilayer. Topologically, residues Pro-141 to His-185 are extracellular. An N-linked (GlcNAc...) asparagine glycan is attached at Asn-176. The helical transmembrane segment at Leu-186–Asp-215 threads the bilayer. The Cytoplasmic segment spans residues Asp-216–Thr-234. A helical transmembrane segment spans residues Met-235–Ile-255. The Extracellular portion of the chain corresponds to Asn-256 to Val-273. Residues Gly-274–Pro-298 traverse the membrane as a helical segment. Topologically, residues Lys-299–Gln-366 are cytoplasmic. Thr-318 is modified (phosphothreonine). Residues Asp-319–Asp-342 are disordered. Ser-320 is modified (phosphoserine). The chain crosses the membrane as a helical span at residues Thr-367–Ala-388. Topologically, residues Gly-389 to Tyr-408 are extracellular. The chain crosses the membrane as a helical span at residues Ala-409 to Val-432. Over Lys-433 to His-436 the chain is Cytoplasmic. The helical transmembrane segment at Leu-437–Leu-460 threads the bilayer. Residues Phe-461 to Phe-564 lie on the Extracellular side of the membrane. Positions Leu-483 to Val-543 constitute a Kazal-like domain. 3 cysteine pairs are disulfide-bonded: Cys-489–Cys-520, Cys-495–Cys-516, and Cys-504–Cys-541. N-linked (GlcNAc...) asparagine glycosylation is present at Asn-538. The chain crosses the membrane as a helical span at residues Leu-565–Leu-587. The Cytoplasmic portion of the chain corresponds to Arg-588–Thr-596. A helical membrane pass occupies residues Leu-597 to Ile-622. Over Asp-623–Gln-655 the chain is Extracellular. A helical membrane pass occupies residues Phe-656 to Leu-673. The Cytoplasmic portion of the chain corresponds to Arg-674–Val-709. The disordered stretch occupies residues Glu-679 to Val-709.

The protein belongs to the organo anion transporter (TC 2.A.60) family. In terms of tissue distribution, strongly expressed in the liver, at the sinusoidal membrane of the hepatocytes. Expressed in the kidney. Expressed in placental trophoblasts and syncytiotrophoblast. Expressed in the small intestine. Expressed in the blood-brain barrier, in endothelial cells of brain capillaries. Expressed in the retina, in the inner nuclear layer and the inner plexiform layer. Expressed in skelettal muscles. In testis, primarily localized to the basal membrane of Sertoli cells and weakly expressed within the tubules. Also expressed in pancreas, lung, heart, colon, ovary and spleen. Expressed in fetal brain, heart, kidney, liver, lung, skeletal muscle, spleen and pancreas. Highest expression in brain. Predominant isoform compared to isoform 3 in small intestine duodenum, kidney, placenta, and skeletal muscle. As to expression, predominant isoform compared to isoform 1 in liver. Also expressed in small intestine duodenum, kidney, brain, placenta, and skeletal muscle.

Its subcellular location is the cell membrane. The protein resides in the basal cell membrane. It is found in the basolateral cell membrane. It localises to the apical cell membrane. It carries out the reaction dehydroepiandrosterone 3-sulfate(out) = dehydroepiandrosterone 3-sulfate(in). It catalyses the reaction estrone 3-sulfate(out) = estrone 3-sulfate(in). The catalysed reaction is estrone 3-sulfate(out) + hydrogencarbonate(in) = estrone 3-sulfate(in) + hydrogencarbonate(out). The enzyme catalyses taurocholate(out) = taurocholate(in). It carries out the reaction coproporphyrin III(out) = coproporphyrin III(in). It catalyses the reaction substance P(out) = substance P(in). The catalysed reaction is pregnenolone sulfate(out) = pregnenolone sulfate(in). The enzyme catalyses prostaglandin E2(out) = prostaglandin E2(in). It carries out the reaction prostaglandin D2(out) = prostaglandin D2(in). It catalyses the reaction L-thyroxine(out) = L-thyroxine(in). With respect to regulation, E1S, DHEA-S and PregS transports are regulated by steroid hormones. In the case of testosterone, transport of E1S and DHEA-S was inhibited, whereas progesterone stimulated E1S, DHEA-S and PregS uptake. Progesterone stimulates high-affinity uptake of E1S whereas it inhibits low-affinity uptake of E1S. Progesterone doesn't affect the uptake of PGE2. Mediates the Na(+)-independent transport of steroid sulfate conjugates and other specific organic anions. Responsible for the transport of estrone 3-sulfate (E1S) through the basal membrane of syncytiotrophoblast, highlighting a potential role in the placental absorption of fetal-derived sulfated steroids including the steroid hormone precursor dehydroepiandrosterone sulfate (DHEA-S). Also facilitates the uptake of sulfated steroids at the basal/sinusoidal membrane of hepatocytes, therefore accounting for the major part of organic anions clearance of liver. Mediates the intestinal uptake of sulfated steroids. Mediates the uptake of the neurosteroids DHEA-S and pregnenolone sulfate (PregS) into the endothelial cells of the blood-brain barrier as the first step to enter the brain. Also plays a role in the reuptake of neuropeptides such as substance P/TAC1 and vasoactive intestinal peptide/VIP released from retinal neurons. May act as a heme transporter that promotes cellular iron availability via heme oxygenase/HMOX2 and independently of TFRC. Also transports heme by-product coproporphyrin III (CPIII), and may be involved in their hepatic disposition. Mediates the uptake of other substrates such as prostaglandins D2 (PGD2), E1 (PGE1) and E2 (PGE2), taurocholate, L-thyroxine, leukotriene C4 and thromboxane B2. May contribute to regulate the transport of organic compounds in testis across the blood-testis-barrier. Shows a pH-sensitive substrate specificity which may be ascribed to the protonation state of the binding site and leads to a stimulation of substrate transport in an acidic microenvironment. The exact transport mechanism has not been yet deciphered but most likely involves an anion exchange, coupling the cellular uptake of organic substrate with the efflux of an anionic compound. Hydrogencarbonate/HCO3(-) acts as a probable counteranion that exchanges for organic anions. Cytoplasmic glutamate may also act as counteranion in the placenta. An inwardly directed proton gradient has also been proposed as the driving force of E1S uptake with a (H(+):E1S) stoichiometry of (1:1). Its function is as follows. Has estrone 3-sulfate (E1S) transport activity comparable with the full-length isoform 1. This is Solute carrier organic anion transporter family member 2B1 from Homo sapiens (Human).